A 412-amino-acid polypeptide reads, in one-letter code: Serine hydroxymethyltransferase (412 aa).

(6S)-5,6,7,8-tetrahydrofolate-binding positions include Leu120 and 124–126; that span reads GHL. Residue Lys228 is modified to N6-(pyridoxal phosphate)lysine. 353–355 is a binding site for (6S)-5,6,7,8-tetrahydrofolate; it reads SPF.

This sequence belongs to the SHMT family. As to quaternary structure, homodimer. Pyridoxal 5'-phosphate serves as cofactor.

The protein localises to the cytoplasm. The catalysed reaction is (6R)-5,10-methylene-5,6,7,8-tetrahydrofolate + glycine + H2O = (6S)-5,6,7,8-tetrahydrofolate + L-serine. Its pathway is one-carbon metabolism; tetrahydrofolate interconversion. It functions in the pathway amino-acid biosynthesis; glycine biosynthesis; glycine from L-serine: step 1/1. Functionally, catalyzes the reversible interconversion of serine and glycine with tetrahydrofolate (THF) serving as the one-carbon carrier. This reaction serves as the major source of one-carbon groups required for the biosynthesis of purines, thymidylate, methionine, and other important biomolecules. Also exhibits THF-independent aldolase activity toward beta-hydroxyamino acids, producing glycine and aldehydes, via a retro-aldol mechanism. The sequence is that of Serine hydroxymethyltransferase from Lachnoclostridium phytofermentans (strain ATCC 700394 / DSM 18823 / ISDg) (Clostridium phytofermentans).